We begin with the raw amino-acid sequence, 204 residues long: Inner membrane protein YagU (204 aa).

The Periplasmic portion of the chain corresponds to 1-14 (MNIFEQTPPNRRRY). Residues 15-35 (GLAAFIGLIAGVVSAFVKWGA) traverse the membrane as a helical segment. The Cytoplasmic segment spans residues 36-100 (EVPLPPRSPV…VYTFAGHVFN (65 aa)). Residues 101 to 121 (WVGVTHIIFSIVFAVGYCVVA) form a helical membrane-spanning segment. Residues 122–132 (EVFPKIKLWQG) lie on the Periplasmic side of the membrane. A helical transmembrane segment spans residues 133 to 153 (LLAGALAQLFVHMISFPLMGL). The Cytoplasmic portion of the chain corresponds to 154–204 (TPPLFDLPWYENVSEIFGHLVWFWSIEIIRRDLRNRITHEPDPEIPLGSNR).

Homodimer.

Its subcellular location is the cell inner membrane. This Escherichia coli (strain K12) protein is Inner membrane protein YagU (yagU).